We begin with the raw amino-acid sequence, 82 residues long: Small ribosomal subunit protein eS27 (82 aa).

The segment at 37–59 (CPGCFTITTVFSHAQTVVICQGC) adopts a C4-type zinc-finger fold.

Belongs to the eukaryotic ribosomal protein eS27 family. As to quaternary structure, component of the small ribosomal subunit (SSU). Mature N.crassa ribosomes consist of a small (40S) and a large (60S) subunit. The 40S small subunit contains 1 molecule of ribosomal RNA (18S rRNA) and at least 32 different proteins. The large 60S subunit contains 3 rRNA molecules (26S, 5.8S and 5S rRNA) and at least 42 different proteins. Requires Zn(2+) as cofactor.

The protein localises to the cytoplasm. Component of the ribosome, a large ribonucleoprotein complex responsible for the synthesis of proteins in the cell. The small ribosomal subunit (SSU) binds messenger RNAs (mRNAs) and translates the encoded message by selecting cognate aminoacyl-transfer RNA (tRNA) molecules. The large subunit (LSU) contains the ribosomal catalytic site termed the peptidyl transferase center (PTC), which catalyzes the formation of peptide bonds, thereby polymerizing the amino acids delivered by tRNAs into a polypeptide chain. The nascent polypeptides leave the ribosome through a tunnel in the LSU and interact with protein factors that function in enzymatic processing, targeting, and the membrane insertion of nascent chains at the exit of the ribosomal tunnel. This chain is Small ribosomal subunit protein eS27 (crp-6), found in Neurospora crassa (strain ATCC 24698 / 74-OR23-1A / CBS 708.71 / DSM 1257 / FGSC 987).